The sequence spans 271 residues: Ribosomal RNA small subunit methyltransferase A (271 aa).

Residues His-11, Leu-13, Gly-38, Glu-58, Asp-86, and Asn-101 each contribute to the S-adenosyl-L-methionine site.

This sequence belongs to the class I-like SAM-binding methyltransferase superfamily. rRNA adenine N(6)-methyltransferase family. RsmA subfamily.

The protein localises to the cytoplasm. It catalyses the reaction adenosine(1518)/adenosine(1519) in 16S rRNA + 4 S-adenosyl-L-methionine = N(6)-dimethyladenosine(1518)/N(6)-dimethyladenosine(1519) in 16S rRNA + 4 S-adenosyl-L-homocysteine + 4 H(+). In terms of biological role, specifically dimethylates two adjacent adenosines (A1518 and A1519) in the loop of a conserved hairpin near the 3'-end of 16S rRNA in the 30S particle. May play a critical role in biogenesis of 30S subunits. This chain is Ribosomal RNA small subunit methyltransferase A, found in Helicobacter pylori (strain G27).